A 180-amino-acid polypeptide reads, in one-letter code: Crossover junction endodeoxyribonuclease RuvC (180 aa).

Active-site residues include aspartate 7, glutamate 66, and aspartate 138. Residues aspartate 7, glutamate 66, and aspartate 138 each coordinate Mg(2+).

It belongs to the RuvC family. Homodimer which binds Holliday junction (HJ) DNA. The HJ becomes 2-fold symmetrical on binding to RuvC with unstacked arms; it has a different conformation from HJ DNA in complex with RuvA. In the full resolvosome a probable DNA-RuvA(4)-RuvB(12)-RuvC(2) complex forms which resolves the HJ. Requires Mg(2+) as cofactor.

It is found in the cytoplasm. It catalyses the reaction Endonucleolytic cleavage at a junction such as a reciprocal single-stranded crossover between two homologous DNA duplexes (Holliday junction).. Its function is as follows. The RuvA-RuvB-RuvC complex processes Holliday junction (HJ) DNA during genetic recombination and DNA repair. Endonuclease that resolves HJ intermediates. Cleaves cruciform DNA by making single-stranded nicks across the HJ at symmetrical positions within the homologous arms, yielding a 5'-phosphate and a 3'-hydroxyl group; requires a central core of homology in the junction. The consensus cleavage sequence is 5'-(A/T)TT(C/G)-3'. Cleavage occurs on the 3'-side of the TT dinucleotide at the point of strand exchange. HJ branch migration catalyzed by RuvA-RuvB allows RuvC to scan DNA until it finds its consensus sequence, where it cleaves and resolves the cruciform DNA. The sequence is that of Crossover junction endodeoxyribonuclease RuvC from Burkholderia thailandensis (strain ATCC 700388 / DSM 13276 / CCUG 48851 / CIP 106301 / E264).